Consider the following 277-residue polypeptide: Tryptophan synthase alpha chain (277 aa).

Catalysis depends on proton acceptor residues Glu-42 and Glu-53.

Belongs to the TrpA family. As to quaternary structure, tetramer of two alpha and two beta chains.

It catalyses the reaction (1S,2R)-1-C-(indol-3-yl)glycerol 3-phosphate + L-serine = D-glyceraldehyde 3-phosphate + L-tryptophan + H2O. It participates in amino-acid biosynthesis; L-tryptophan biosynthesis; L-tryptophan from chorismate: step 5/5. The alpha subunit is responsible for the aldol cleavage of indoleglycerol phosphate to indole and glyceraldehyde 3-phosphate. The protein is Tryptophan synthase alpha chain of Natronomonas pharaonis (strain ATCC 35678 / DSM 2160 / CIP 103997 / JCM 8858 / NBRC 14720 / NCIMB 2260 / Gabara) (Halobacterium pharaonis).